The primary structure comprises 96 residues: Prokineticin Bm8-e (96 aa).

Residues 1-19 (MKCFAQIVVLLLVIAFSHG) form the signal peptide. 5 disulfides stabilise this stretch: Cys-26/Cys-38, Cys-32/Cys-50, Cys-37/Cys-78, Cys-60/Cys-86, and Cys-80/Cys-95.

Belongs to the AVIT (prokineticin) family. As to expression, expressed by the skin glands.

The protein localises to the secreted. Potent agonist for both PKR1/PROKR1 and PKR2/PROKR2, and inducer of a potent and long-lasting hyperalgesia. Also potentiates capsaicin-induced TRPV1 current, when tested on DRG neurons. At subnanomolar concentrations, this protein both induces potent chemotaxis of macrophages and stimulates LPS-induced production of the pro-inflammatory cytokines IL-1 and IL-12. In vivo, potently stimulates the contraction of the guinea-pig gastrointestinal (GI) smooth muscle (nanomolar concentration). The chain is Prokineticin Bm8-e from Bombina maxima (Giant fire-bellied toad).